We begin with the raw amino-acid sequence, 338 residues long: tRNA N6-adenosine threonylcarbamoyltransferase (338 aa).

Fe cation-binding residues include His-111 and His-115. Residues 134–138 (VVSGG), Asp-167, Gly-180, Asp-184, and Asn-272 each bind substrate. Asp-300 lines the Fe cation pocket.

The protein belongs to the KAE1 / TsaD family. The cofactor is Fe(2+).

It is found in the cytoplasm. The catalysed reaction is L-threonylcarbamoyladenylate + adenosine(37) in tRNA = N(6)-L-threonylcarbamoyladenosine(37) in tRNA + AMP + H(+). Required for the formation of a threonylcarbamoyl group on adenosine at position 37 (t(6)A37) in tRNAs that read codons beginning with adenine. Is involved in the transfer of the threonylcarbamoyl moiety of threonylcarbamoyl-AMP (TC-AMP) to the N6 group of A37, together with TsaE and TsaB. TsaD likely plays a direct catalytic role in this reaction. The chain is tRNA N6-adenosine threonylcarbamoyltransferase from Syntrophus aciditrophicus (strain SB).